We begin with the raw amino-acid sequence, 449 residues long: Bifunctional protein GlmU (449 aa).

The segment at 1-228 is pyrophosphorylase; it reads MSTALVILAA…EAETLGINSR (228 aa). Residues 8-11, Lys22, Gln75, 80-81, 103-105, Gly140, Glu154, Asn169, and Asn226 contribute to the UDP-N-acetyl-alpha-D-glucosamine site; these read LAAG, GT, and YGD. Asp105 serves as a coordination point for Mg(2+). Residue Asn226 coordinates Mg(2+). A linker region spans residues 229–249; it reads ADLAAAEAVFQAHARAELLDI. The tract at residues 250 to 449 is N-acetyltransferase; the sequence is GVTLTAPETV…RAKKAAKAKG (200 aa). 2 residues coordinate UDP-N-acetyl-alpha-D-glucosamine: Arg315 and Lys333. The Proton acceptor role is filled by His345. Tyr348 and Asn359 together coordinate UDP-N-acetyl-alpha-D-glucosamine. Acetyl-CoA is bound by residues Ala362, 368–369, Ser387, Thr405, and Arg422; that span reads NY.

The protein in the N-terminal section; belongs to the N-acetylglucosamine-1-phosphate uridyltransferase family. In the C-terminal section; belongs to the transferase hexapeptide repeat family. Homotrimer. Mg(2+) is required as a cofactor.

The protein resides in the cytoplasm. The enzyme catalyses alpha-D-glucosamine 1-phosphate + acetyl-CoA = N-acetyl-alpha-D-glucosamine 1-phosphate + CoA + H(+). The catalysed reaction is N-acetyl-alpha-D-glucosamine 1-phosphate + UTP + H(+) = UDP-N-acetyl-alpha-D-glucosamine + diphosphate. It participates in nucleotide-sugar biosynthesis; UDP-N-acetyl-alpha-D-glucosamine biosynthesis; N-acetyl-alpha-D-glucosamine 1-phosphate from alpha-D-glucosamine 6-phosphate (route II): step 2/2. Its pathway is nucleotide-sugar biosynthesis; UDP-N-acetyl-alpha-D-glucosamine biosynthesis; UDP-N-acetyl-alpha-D-glucosamine from N-acetyl-alpha-D-glucosamine 1-phosphate: step 1/1. The protein operates within bacterial outer membrane biogenesis; LPS lipid A biosynthesis. Its function is as follows. Catalyzes the last two sequential reactions in the de novo biosynthetic pathway for UDP-N-acetylglucosamine (UDP-GlcNAc). The C-terminal domain catalyzes the transfer of acetyl group from acetyl coenzyme A to glucosamine-1-phosphate (GlcN-1-P) to produce N-acetylglucosamine-1-phosphate (GlcNAc-1-P), which is converted into UDP-GlcNAc by the transfer of uridine 5-monophosphate (from uridine 5-triphosphate), a reaction catalyzed by the N-terminal domain. In Ruegeria sp. (strain TM1040) (Silicibacter sp.), this protein is Bifunctional protein GlmU.